A 368-amino-acid polypeptide reads, in one-letter code: Flavanone 3-dioxygenase (368 aa).

One can recognise a Fe2OG dioxygenase domain in the interval 191–295 (CVDMDQKVIV…RMSIATFQNP (105 aa)). Fe cation is bound by residues His218, Asp220, and His276. Arg286 lines the 2-oxoglutarate pocket.

Belongs to the iron/ascorbate-dependent oxidoreductase family. It depends on Fe(2+) as a cofactor. The cofactor is L-ascorbate.

The catalysed reaction is a (2S)-flavan-4-one + 2-oxoglutarate + O2 = a (2R,3R)-dihydroflavonol + succinate + CO2. The protein operates within secondary metabolite biosynthesis; flavonoid biosynthesis. In terms of biological role, involved in the conversion of (2S)-naringenin to (+)-(2R/3R)-dihydrokaempferol. This Petroselinum crispum (Parsley) protein is Flavanone 3-dioxygenase (FHT).